The sequence spans 391 residues: 3-ketoacyl-CoA thiolase (391 aa).

Cys95 acts as the Acyl-thioester intermediate in catalysis. Active-site proton acceptor residues include His347 and Cys377.

The protein belongs to the thiolase-like superfamily. Thiolase family. Heterotetramer of two alpha chains (FadB) and two beta chains (FadA).

The protein resides in the cytoplasm. The catalysed reaction is an acyl-CoA + acetyl-CoA = a 3-oxoacyl-CoA + CoA. It functions in the pathway lipid metabolism; fatty acid beta-oxidation. In terms of biological role, catalyzes the final step of fatty acid oxidation in which acetyl-CoA is released and the CoA ester of a fatty acid two carbons shorter is formed. The sequence is that of 3-ketoacyl-CoA thiolase from Pseudomonas syringae pv. syringae (strain B728a).